We begin with the raw amino-acid sequence, 864 residues long: Leucine--tRNA ligase (864 aa).

The 'HIGH' region motif lies at 42 to 52 (PYPSGKLHMGH). The short motif at 624–628 (KMSKS) is the 'KMSKS' region element. Residue K627 coordinates ATP.

It belongs to the class-I aminoacyl-tRNA synthetase family.

It is found in the cytoplasm. The catalysed reaction is tRNA(Leu) + L-leucine + ATP = L-leucyl-tRNA(Leu) + AMP + diphosphate. The sequence is that of Leucine--tRNA ligase from Burkholderia vietnamiensis (strain G4 / LMG 22486) (Burkholderia cepacia (strain R1808)).